A 652-amino-acid polypeptide reads, in one-letter code: MSDNKWLRNGFVWMILIIAAIAVWVTFVQGGRGGATITTQEMAADIKAGKVERLVMTSGSDEIQVQYIGTNEVRTLRLPPNVDIFELLKTFGIDPQQVDIQTHRASQWGNVLGTLTFLLPTLFLIGVIIFMMRQAQGTNNQALSFGKSRARVFTSNRPTVTFDDVAGVDEAKEELQEIVEFLKYPEKFAALGARIPRGVLLVGPPGTGKTLLSRAVAGEAGVPFFSISGSEFVEMFVGVGASRVRDLFDQAKRNAPCIVFIDEIDAVGRQRGAGLGGSHDEREQTLNQILVEMDGFDSSTNVIVIAATNRPDVLDPALLRPGRFDRQVVLDRPDLHGRLAILKVHTRGKPLESDVDLEDLARQTPGFSGADLENLVNEAAILAARRNKKTIGRRELYEAIDRVVAGPERKSRRISEREKLMTAYHEAGHALVARMLPHADPVHKVSIVARGMMGGYTRVLPEEDRFFWTKKQFEAQLAVFMAGLVAEELVFQEVSTGAANDIERATTLARRMVTEFGMSERLGPLAFGRKEELVFLGREIAEQRNYSDQVAYEIDQEVRRLIDQAYQTAKQILLDHMDKLEKIATLLVEKETLDGHEIEALFDEPRPRPELVGPPLTRPAALIATPETARPDSPSEARPAAPVPHIKPQPAS.

Residues 1–9 are Cytoplasmic-facing; that stretch reads MSDNKWLRN. A helical membrane pass occupies residues 10 to 30; sequence GFVWMILIIAAIAVWVTFVQG. Residues 31–110 are Extracellular-facing; it reads GRGGATITTQ…QTHRASQWGN (80 aa). Residues 111–131 traverse the membrane as a helical segment; it reads VLGTLTFLLPTLFLIGVIIFM. Residues 132-652 lie on the Cytoplasmic side of the membrane; it reads MRQAQGTNNQ…VPHIKPQPAS (521 aa). 203-210 contributes to the ATP binding site; sequence GPPGTGKT. His425 contacts Zn(2+). The active site involves Glu426. The Zn(2+) site is built by His429 and Asp501. Residues 623–652 form a disordered region; sequence IATPETARPDSPSEARPAAPVPHIKPQPAS. Pro residues predominate over residues 641-652; sequence APVPHIKPQPAS.

The protein in the central section; belongs to the AAA ATPase family. In the C-terminal section; belongs to the peptidase M41 family. Homohexamer. Zn(2+) serves as cofactor.

The protein resides in the cell membrane. Acts as a processive, ATP-dependent zinc metallopeptidase for both cytoplasmic and membrane proteins. Plays a role in the quality control of integral membrane proteins. The sequence is that of ATP-dependent zinc metalloprotease FtsH 1 from Thermomicrobium roseum (strain ATCC 27502 / DSM 5159 / P-2).